The following is a 399-amino-acid chain: F-box protein At1g10110 (399 aa).

In terms of domain architecture, F-box spans 9-56; that stretch reads PNWSELVTDILSLVFKHLSFTDFARAKTVCSSWYFASKSSSPRKNHTP.

This Arabidopsis thaliana (Mouse-ear cress) protein is F-box protein At1g10110.